Reading from the N-terminus, the 932-residue chain is GPI ethanolamine phosphate transferase 1 (932 aa).

Over 1-8 the chain is Cytoplasmic; the sequence is MISLNKKL. Residues 9 to 29 traverse the membrane as a helical segment; the sequence is VLLVGVIFHVAFMWSIFDIYF. Residues 30–456 lie on the Lumenal side of the membrane; that stretch reads VSPLIHGMKH…TYNWLFLRTL (427 aa). N-linked (GlcNAc...) asparagine glycosylation is found at asparagine 138, asparagine 202, and asparagine 360. A helical transmembrane segment spans residues 457–477; the sequence is VTIGFFGWIAVAFCSYLLAFV. At 478–486 the chain is on the cytoplasmic side; sequence VQSDKPFTT. Residues 487 to 507 traverse the membrane as a helical segment; the sequence is SLPLKGVAYVALAILSGFFVF. The Lumenal portion of the chain corresponds to 508–509; the sequence is QK. Residues 510–530 form a helical membrane-spanning segment; sequence SPLHYHLYAVFPVVFWEAVLQ. Over 531 to 551 the chain is Cytoplasmic; sequence RRTAVAEGISILARRSTSKAP. Residues 552–572 traverse the membrane as a helical segment; sequence ALAAILDIGLSLVLLEAIVYG. At 573–577 the chain is on the lumenal side; it reads YFHRE. A helical membrane pass occupies residues 578–598; the sequence is IFSVCFGLATLWPFVHNFTVA. Topologically, residues 599-603 are cytoplasmic; it reads KREWP. A helical transmembrane segment spans residues 604 to 624; that stretch reads TTLAWVVMCAIMSSFTLLEVV. Residues 625–627 are Lumenal-facing; that stretch reads KVE. The helical transmembrane segment at 628 to 648 threads the bilayer; the sequence is SIEQILLSGALMLVIGLVFTI. Residues 649–653 are Cytoplasmic-facing; that stretch reads HLQRK. A helical transmembrane segment spans residues 654–674; it reads LALAASTVCVLFAQILLVVAT. Over 675–696 the chain is Lumenal; that stretch reads MYFTRESVESLTARNGLPLFSQ. Residues 697 to 717 traverse the membrane as a helical segment; that stretch reads VGGWISLLLSLAVPFLHFLGS. The Cytoplasmic portion of the chain corresponds to 718–737; the sequence is DAKDYRLRLLIIFLAFGPTF. A helical membrane pass occupies residues 738 to 758; sequence VILTISWEGFFYVCFFAILVI. Residues 759–786 are Lumenal-facing; the sequence is WIELETQMRDARVTPQTRADLTPGDFRM. The helical transmembrane segment at 787–807 threads the bilayer; it reads ALFTFFMSQIGFFGIGNIASI. The Cytoplasmic portion of the chain corresponds to 808-828; the sequence is SSFSLDSVYRLIPVFDPFSMG. The chain crosses the membrane as a helical span at residues 829-849; it reads ALLMFKILVPFAVLSACLGIL. Residues 850-859 lie on the Lumenal side of the membrane; that stretch reads NLKLGVPPSA. The helical transmembrane segment at 860 to 880 threads the bilayer; sequence LFSMVLCVSDILTLNFFYLVV. The Cytoplasmic segment spans residues 881–900; it reads DEGSWLDIGTGISHYCIASG. The chain crosses the membrane as a helical span at residues 901–921; that stretch reads LSLFMMVLEYLSGVLVAGVTI. Residues 922–932 are Lumenal-facing; that stretch reads APHVSKIKKDM.

It belongs to the PIGG/PIGN/PIGO family. PIGN subfamily.

The protein resides in the endoplasmic reticulum membrane. Its pathway is glycolipid biosynthesis; glycosylphosphatidylinositol-anchor biosynthesis. In terms of biological role, ethanolamine phosphate transferase involved in glycosylphosphatidylinositol-anchor biosynthesis. Transfers ethanolamine phosphate to the first alpha-1,4-linked mannose of the glycosylphosphatidylinositol precursor of GPI-anchor. The chain is GPI ethanolamine phosphate transferase 1 (MCD4) from Yarrowia lipolytica (strain CLIB 122 / E 150) (Yeast).